Consider the following 482-residue polypeptide: BEL1-like homeodomain protein 7 (482 aa).

An SR/KY domain region spans residues 118-134 (SKYLKAAQELLDETVNV). Positions 167 to 238 (ERQELQSKLS…CLRDAISGQI (72 aa)) are BELL domain. Residues 285 to 347 (TWRPQRGLPD…NARVRLWKPM (63 aa)) constitute a DNA-binding region (homeobox). Positions 358–401 (DALQENDPNQSSENTPEITEIQELQTESSSNNGHVPGVASSSMR) are disordered. The span at 363–401 (NDPNQSSENTPEITEIQELQTESSSNNGHVPGVASSSMR) shows a compositional bias: polar residues.

This sequence belongs to the TALE/BELL homeobox family. In terms of assembly, may form heterodimeric complexes with TALE/KNOX proteins.

Its subcellular location is the nucleus. This is BEL1-like homeodomain protein 7 (BLH7) from Arabidopsis thaliana (Mouse-ear cress).